Consider the following 808-residue polypeptide: Phenylalanine--tRNA ligase beta subunit (808 aa).

Residues 40-149 (RPELDFVKIV…DQAEVGKTIR (110 aa)) form the tRNA-binding domain. The region spanning 407–484 (HKEVRIHTDI…RTKGYDTIQV (78 aa)) is the B5 domain. D462, D468, E471, and E472 together coordinate Mg(2+). Residues 716–808 (SQFPEAEIDL…LAGKNGFVLR (93 aa)) form the FDX-ACB domain.

It belongs to the phenylalanyl-tRNA synthetase beta subunit family. Type 1 subfamily. In terms of assembly, tetramer of two alpha and two beta subunits. The cofactor is Mg(2+).

The protein resides in the cytoplasm. The catalysed reaction is tRNA(Phe) + L-phenylalanine + ATP = L-phenylalanyl-tRNA(Phe) + AMP + diphosphate + H(+). In Leptospira interrogans serogroup Icterohaemorrhagiae serovar Lai (strain 56601), this protein is Phenylalanine--tRNA ligase beta subunit.